We begin with the raw amino-acid sequence, 276 residues long: Large ribosomal subunit protein uL2 (276 aa).

The interval 224-276 (VMNPVDHPHGGGEGKAPIGRKSPMTPWGKPTLGYKTRKKKNKSDKFIIRRRKK) is disordered. Basic residues predominate over residues 258-276 (KTRKKKNKSDKFIIRRRKK).

This sequence belongs to the universal ribosomal protein uL2 family. In terms of assembly, part of the 50S ribosomal subunit. Forms a bridge to the 30S subunit in the 70S ribosome.

In terms of biological role, one of the primary rRNA binding proteins. Required for association of the 30S and 50S subunits to form the 70S ribosome, for tRNA binding and peptide bond formation. It has been suggested to have peptidyltransferase activity; this is somewhat controversial. Makes several contacts with the 16S rRNA in the 70S ribosome. The chain is Large ribosomal subunit protein uL2 from Geobacillus kaustophilus (strain HTA426).